The sequence spans 2276 residues: Poly [ADP-ribose] polymerase tankyrase (2276 aa).

2 stretches are compositionally biased toward basic residues: residues 1 to 15 and 87 to 98; these read MARR…VKAA and KAVKAPKVKAPS. Disordered regions lie at residues 1-20 and 79-103; these read MARR…KIDG and SSKT…KGND. ANK repeat units lie at residues 345 to 374, 378 to 407, 411 to 440, 461 to 490, 498 to 527, 531 to 560, 564 to 593, 598 to 627, 675 to 725, 729 to 758, 970 to 999, 1171 to 1200, 1204 to 1233, 1472 to 1501, and 1505 to 1535; these read KNIT…TINI, DNWY…SVTM, QTET…DLEK, SGNS…IVVD, NRLT…LVEG, KKRT…SLTL, SGNT…NILS, WQLY…KDKA, SGQT…KVDV, EDNT…NKRN, KDDV…EMHL, NGNT…HVDL, DGNT…DVTE, GLIP…SLKT, and YGRT…AVVL. A disordered region spans residues 1570 to 1649; that stretch reads VPARVESDEE…STGPKRKKLV (80 aa). 2 stretches are compositionally biased toward acidic residues: residues 1576-1590 and 1612-1622; these read SDEE…ESGE and SDDEDDDDDDS. The stretch at 1662–1706 is one ANK 16 repeat; sequence KENNPLHYFIEPLAWENVELLGDLAAANKTAIVQCLIDKRSPNPI. In terms of domain architecture, WGR spans 1788–1889; sequence GLVSFCDETQ…ANFRDMPKKY (102 aa). The PARP alpha-helical domain maps to 1910–2045; sequence KNTEKDPIRR…EIETATRLLC (136 aa). The region spanning 2047–2276 is the PARP catalytic domain; the sequence is AEFRQDLDRV…VLPKYIVMYK (230 aa).

As to expression, expressed throughout the head and tail, in germ cells and somatic cells.

It localises to the nucleus. The protein localises to the chromosome. It catalyses the reaction NAD(+) + (ADP-D-ribosyl)n-acceptor = nicotinamide + (ADP-D-ribosyl)n+1-acceptor + H(+).. The catalysed reaction is L-aspartyl-[protein] + NAD(+) = 4-O-(ADP-D-ribosyl)-L-aspartyl-[protein] + nicotinamide. The enzyme catalyses L-glutamyl-[protein] + NAD(+) = 5-O-(ADP-D-ribosyl)-L-glutamyl-[protein] + nicotinamide. In terms of biological role, poly[ADP-ribose] polymerases modify various nuclear proteins by poly(ADP-ribosyl)ation, a post-translational modification synthesized after DNA damage that appears as an obligatory step in a detection/signaling pathway leading to the reparation of DNA strand breaks and programmed cell death. In Caenorhabditis elegans, this protein is Poly [ADP-ribose] polymerase tankyrase.